We begin with the raw amino-acid sequence, 76 residues long: uncharacterized protein (76 aa).

It to L.innocua lin1255, lin1742 and lin2600.

This is an uncharacterized protein from Listeria innocua serovar 6a (strain ATCC BAA-680 / CLIP 11262).